The chain runs to 590 residues: MPTRLTNYFLRTLREDPADAEVTSHRLLVRAGYIRRQAPGVFAWLPLGLRVKAKIERIIREELAAAGAHEVHFPALLPREPYEITGRWEEYGDALFHLKDRKGADYLLAPTHEEAFTLLVKDLYSSYKDLPLTIFQIQDKYRDEARPRAGLLRGREFTMKDAYSFDATDAGLDVSYQAQRDAYERIFARLGLDFVIVQADAGAMGGSRSEEFLHPTPIGEDTFVRSAGGYAANVEAFTTVAPPARPFEGLPSPEVHDTPNAPTIQALVEVANEQSPRPDGRVWTAADTLKNVVLALTHLDGTRELVVVGLPGDREVDLKRAEVAFAPAGVEAATEDDFAANPGLVKGYIGPWSAGGPVLGEEAATGLRFLVDLRVVDGSGWITGANLPGKHVFGLVAGRDFDWDGTVEVAEVKAGDPAPDGSGPVELARGMEIGHVFQLGRKYADALGLTVLDENGKLVTVTMGSYGIGVTRILAIIAEENNDDKGLVWPEAVAPFDVHVVAAGREQVAFDVAEQAVAQLEAVGLDVLYDDRPKVSPGVKFGDAELIGVPRVLVVGRGAAQGEVELWDRRGGNHTTLPLSEAVAALTTSS.

It belongs to the class-II aminoacyl-tRNA synthetase family. ProS type 1 subfamily. In terms of assembly, homodimer.

The protein localises to the cytoplasm. It catalyses the reaction tRNA(Pro) + L-proline + ATP = L-prolyl-tRNA(Pro) + AMP + diphosphate. In terms of biological role, catalyzes the attachment of proline to tRNA(Pro) in a two-step reaction: proline is first activated by ATP to form Pro-AMP and then transferred to the acceptor end of tRNA(Pro). As ProRS can inadvertently accommodate and process non-cognate amino acids such as alanine and cysteine, to avoid such errors it has two additional distinct editing activities against alanine. One activity is designated as 'pretransfer' editing and involves the tRNA(Pro)-independent hydrolysis of activated Ala-AMP. The other activity is designated 'posttransfer' editing and involves deacylation of mischarged Ala-tRNA(Pro). The misacylated Cys-tRNA(Pro) is not edited by ProRS. This chain is Proline--tRNA ligase, found in Leifsonia xyli subsp. xyli (strain CTCB07).